The following is a 518-amino-acid chain: Protein translocase subunit SecD (518 aa).

The next 6 membrane-spanning stretches (helical) occupy residues 9–29 (IFLSIICTVFAVICALPNFMQ), 361–381 (LIGFIAVCIFMVWSYGVLGLF), 384–404 (IALSLALLYILALLSLFQATL), 406–426 (LPGIAGIILTMGMAVDANVLI), 452–474 (FATILDSNLTTLIVAFLLYIFGV), and 486–506 (IGIISSMFSAIIITKLLIDIW).

It belongs to the SecD/SecF family. SecD subfamily. Forms a complex with SecF. Part of the essential Sec protein translocation apparatus which comprises SecA, SecYEG and auxiliary proteins SecDF-YajC and YidC.

Its subcellular location is the cell inner membrane. Its function is as follows. Part of the Sec protein translocase complex. Interacts with the SecYEG preprotein conducting channel. SecDF uses the proton motive force (PMF) to complete protein translocation after the ATP-dependent function of SecA. This Rickettsia felis (strain ATCC VR-1525 / URRWXCal2) (Rickettsia azadi) protein is Protein translocase subunit SecD.